An 809-amino-acid polypeptide reads, in one-letter code: Leucine--tRNA ligase (809 aa).

The 'HIGH' region signature appears at 40-50 (PYPSGRIHMGH). The 'KMSKS' region motif lies at 579-583 (KMSKS). ATP is bound at residue K582.

Belongs to the class-I aminoacyl-tRNA synthetase family.

Its subcellular location is the cytoplasm. The enzyme catalyses tRNA(Leu) + L-leucine + ATP = L-leucyl-tRNA(Leu) + AMP + diphosphate. The chain is Leucine--tRNA ligase from Campylobacter jejuni subsp. jejuni serotype O:23/36 (strain 81-176).